The sequence spans 623 residues: Membrane protein insertase YidC (623 aa).

The next 5 helical transmembrane spans lie at 8 to 28 (LILATGLSFLVIMVWFFLFPP), 379 to 399 (MGLAIIALTFLLKALVLPLAY), 449 to 469 (LPILIQIPIFFSLYKVIFVTI), 507 to 527 (TTMALIFIGALPILLGVSMWL), and 543 to 563 (IFAWMPWVFMFMLGHFASGLV). Positions 601-617 (KPAAQPAGKAANDGAAP) are enriched in low complexity. Positions 601-623 (KPAAQPAGKAANDGAAPAKKRKP) are disordered.

It belongs to the OXA1/ALB3/YidC family. Type 1 subfamily. In terms of assembly, interacts with the Sec translocase complex via SecD. Specifically interacts with transmembrane segments of nascent integral membrane proteins during membrane integration.

The protein resides in the cell inner membrane. Its function is as follows. Required for the insertion and/or proper folding and/or complex formation of integral membrane proteins into the membrane. Involved in integration of membrane proteins that insert both dependently and independently of the Sec translocase complex, as well as at least some lipoproteins. Aids folding of multispanning membrane proteins. This Cereibacter sphaeroides (strain ATCC 17023 / DSM 158 / JCM 6121 / CCUG 31486 / LMG 2827 / NBRC 12203 / NCIMB 8253 / ATH 2.4.1.) (Rhodobacter sphaeroides) protein is Membrane protein insertase YidC.